A 333-amino-acid chain; its full sequence is MKPFPTHPDAIPAELQDVMDRLGSVAIEVANRIARGGIDEDLAGLCGTNTDGDGQKALDVIADDAFRVALEGSAVRFYASEEQDTAVTLNEAGTLALAIDPLDGSSNIDTNLSVGTIFAIWPAAATAEASFLRLGSELIAAGYVIYGPQVCMMVSFGKGTQKYVLDPGSRSFVLVDRAVKVPPSSTEFAINASNYRHWPKPIRAYIDDCVAGTEGPRGRNFNMRWLASLVAETHRILARGGVFLYPRDSRKGYEQGRLRYLYECAPIAFVITQAGGGATDGENPILGQTPSRLHARTPFVFGSAEKVARITAYHDLPEQETSALFGNRGLFRS.

Residues glutamate 81, aspartate 100, leucine 102, and aspartate 103 each contribute to the Mg(2+) site. Substrate is bound by residues 103-106 and asparagine 191; that span reads DGSS. Glutamate 263 is a binding site for Mg(2+).

The protein belongs to the FBPase class 1 family. Homotetramer. Mg(2+) is required as a cofactor.

The protein localises to the cytoplasm. The catalysed reaction is beta-D-fructose 1,6-bisphosphate + H2O = beta-D-fructose 6-phosphate + phosphate. The protein operates within carbohydrate biosynthesis; Calvin cycle. This chain is Fructose-1,6-bisphosphatase class 1 1, found in Cereibacter sphaeroides (strain ATCC 17023 / DSM 158 / JCM 6121 / CCUG 31486 / LMG 2827 / NBRC 12203 / NCIMB 8253 / ATH 2.4.1.) (Rhodobacter sphaeroides).